The sequence spans 291 residues: 4-diphosphocytidyl-2-C-methyl-D-erythritol kinase (291 aa).

Lys-10 is an active-site residue. Residue 94–104 participates in ATP binding; that stretch reads PVSAGLAGGSS. Asp-136 is a catalytic residue.

It belongs to the GHMP kinase family. IspE subfamily.

It carries out the reaction 4-CDP-2-C-methyl-D-erythritol + ATP = 4-CDP-2-C-methyl-D-erythritol 2-phosphate + ADP + H(+). It functions in the pathway isoprenoid biosynthesis; isopentenyl diphosphate biosynthesis via DXP pathway; isopentenyl diphosphate from 1-deoxy-D-xylulose 5-phosphate: step 3/6. Catalyzes the phosphorylation of the position 2 hydroxy group of 4-diphosphocytidyl-2C-methyl-D-erythritol. This chain is 4-diphosphocytidyl-2-C-methyl-D-erythritol kinase, found in Listeria welshimeri serovar 6b (strain ATCC 35897 / DSM 20650 / CCUG 15529 / CIP 8149 / NCTC 11857 / SLCC 5334 / V8).